Reading from the N-terminus, the 162-residue chain is NADH-quinone oxidoreductase subunit I 2 (162 aa).

4Fe-4S ferredoxin-type domains lie at 53-83 (LRRY…IESE) and 93-122 (TRYD…ETRI). [4Fe-4S] cluster is bound by residues Cys-63, Cys-66, Cys-69, Cys-73, Cys-102, Cys-105, Cys-108, and Cys-112.

The protein belongs to the complex I 23 kDa subunit family. NDH-1 is composed of 14 different subunits. Subunits NuoA, H, J, K, L, M, N constitute the membrane sector of the complex. Requires [4Fe-4S] cluster as cofactor.

Its subcellular location is the cell inner membrane. The catalysed reaction is a quinone + NADH + 5 H(+)(in) = a quinol + NAD(+) + 4 H(+)(out). In terms of biological role, NDH-1 shuttles electrons from NADH, via FMN and iron-sulfur (Fe-S) centers, to quinones in the respiratory chain. The immediate electron acceptor for the enzyme in this species is believed to be ubiquinone. Couples the redox reaction to proton translocation (for every two electrons transferred, four hydrogen ions are translocated across the cytoplasmic membrane), and thus conserves the redox energy in a proton gradient. This is NADH-quinone oxidoreductase subunit I 2 from Nitrosospira multiformis (strain ATCC 25196 / NCIMB 11849 / C 71).